A 285-amino-acid chain; its full sequence is Probable endonuclease 4 (285 aa).

Positions 69, 109, 145, 179, 182, 216, 229, 231, and 261 each coordinate Zn(2+).

The protein belongs to the AP endonuclease 2 family. Requires Zn(2+) as cofactor.

It catalyses the reaction Endonucleolytic cleavage to 5'-phosphooligonucleotide end-products.. Its function is as follows. Endonuclease IV plays a role in DNA repair. It cleaves phosphodiester bonds at apurinic or apyrimidinic (AP) sites, generating a 3'-hydroxyl group and a 5'-terminal sugar phosphate. In Salmonella agona (strain SL483), this protein is Probable endonuclease 4.